We begin with the raw amino-acid sequence, 416 residues long: NADH-quinone oxidoreductase subunit H (416 aa).

9 consecutive transmembrane segments (helical) span residues 16–36, 84–104, 124–144, 165–185, 197–217, 260–280, 288–308, 320–340, and 353–373; these read LILAKAVGVFVFLVLTVLAAI, PVYLLAPVISVIPAFLAFAVI, LAVAVLYILAVTSVGVYGIVL, VVSYEIAMALSFATVFLYAGT, STWYVFLLLPSFLVYVTSMVG, VSALATTMFLGGWHAPWPISL, WWPLLWFTAKVWVFLFVYIWL, FMAIGWKMLIPVSLAWIMIVA, and WASGLLIAGTVLTFGLAVILW.

This sequence belongs to the complex I subunit 1 family. As to quaternary structure, NDH-1 is composed of 14 different subunits. Subunits NuoA, H, J, K, L, M, N constitute the membrane sector of the complex.

It localises to the cell membrane. The enzyme catalyses a quinone + NADH + 5 H(+)(in) = a quinol + NAD(+) + 4 H(+)(out). Its function is as follows. NDH-1 shuttles electrons from NADH, via FMN and iron-sulfur (Fe-S) centers, to quinones in the respiratory chain. The immediate electron acceptor for the enzyme in this species is believed to be menaquinone. Couples the redox reaction to proton translocation (for every two electrons transferred, four hydrogen ions are translocated across the cytoplasmic membrane), and thus conserves the redox energy in a proton gradient. This subunit may bind ubiquinone. This Mycobacterium sp. (strain KMS) protein is NADH-quinone oxidoreductase subunit H.